The chain runs to 139 residues: D-ribose pyranase (139 aa).

The Proton donor role is filled by histidine 20. Substrate is bound by residues aspartate 28, histidine 106, and 128–130 (YAN).

The protein belongs to the RbsD / FucU family. RbsD subfamily. In terms of assembly, homodecamer.

The protein localises to the cytoplasm. It carries out the reaction beta-D-ribopyranose = beta-D-ribofuranose. Its pathway is carbohydrate metabolism; D-ribose degradation; D-ribose 5-phosphate from beta-D-ribopyranose: step 1/2. In terms of biological role, catalyzes the interconversion of beta-pyran and beta-furan forms of D-ribose. This Pasteurella multocida (strain Pm70) protein is D-ribose pyranase.